The sequence spans 187 residues: Peptidyl-tRNA hydrolase (187 aa).

Tyr-14 contacts tRNA. The active-site Proton acceptor is His-19. Residues Tyr-64, Asn-66, and Asn-112 each coordinate tRNA.

The protein belongs to the PTH family. In terms of assembly, monomer.

It is found in the cytoplasm. The enzyme catalyses an N-acyl-L-alpha-aminoacyl-tRNA + H2O = an N-acyl-L-amino acid + a tRNA + H(+). Functionally, hydrolyzes ribosome-free peptidyl-tRNAs (with 1 or more amino acids incorporated), which drop off the ribosome during protein synthesis, or as a result of ribosome stalling. In terms of biological role, catalyzes the release of premature peptidyl moieties from peptidyl-tRNA molecules trapped in stalled 50S ribosomal subunits, and thus maintains levels of free tRNAs and 50S ribosomes. In Bdellovibrio bacteriovorus (strain ATCC 15356 / DSM 50701 / NCIMB 9529 / HD100), this protein is Peptidyl-tRNA hydrolase.